The following is a 578-amino-acid chain: MPLKHYLLLLVGCQAWALGLAYYGCPSECTCSRASQVECTGARIVAMPTPLPWNAMSLQVVNTHITELPENLFLNISALIALKMEKNELSTIMPGAFRNLGSLRYLSLANNKLRMLPIRVFQDVNNLESLLLSNNQLVQIQPAQFSQFSNLRELQLHGNNLESIPEEAFDHLVGLTKLNLGRNSFTHLSPRLFQHLGNLQVLRLHENRLSDIPMGTFDALGNLQELALQENQIGTLSPGLFHNNRNLQRLYLSNNHISQLPPGIFMQLPQLNKLTLFGNSLRELSPGVFGPMPNLRELWLYNNHITSLADNTFSHLNQLQVLILSHNQLTYISPGAFNGLTNLRELSLHTNALQDLDSNVFRSLANLQNISLQSNRLRQLPGSIFANVNGLTTIQLQNNNLENLPLGIFDHLVNLCELRLYDNPWRCDSDILPLHNWLLLNRARLGTDTLPVCSSPANVRGQSLVIININFPGPSVQGPETPEVPSYPDTPSYPDTTSVSSTTEITSAVDDYTDLTTIEATDDRNTWGMTEAQSGLAIAAIVIGIIALACSLAACICCCCCKKRSQAVLMQMKAPNEC.

Positions 1 to 21 (MPLKHYLLLLVGCQAWALGLA) are cleaved as a signal peptide. In terms of domain architecture, LRRNT spans 22 to 53 (YYGCPSECTCSRASQVECTGARIVAMPTPLPW). The Extracellular segment spans residues 22 to 535 (YYGCPSECTC…TWGMTEAQSG (514 aa)). LRR repeat units follow at residues 54-75 (NAMS…LFLN), 78-99 (ALIA…AFRN), 102-123 (SLRY…VFQD), 126-147 (NLES…QFSQ), 150-171 (NLRE…AFDH), 174-195 (GLTK…LFQH), 198-219 (NLQV…TFDA), 222-243 (NLQE…LFHN), 246-267 (NLQR…IFMQ), 270-291 (QLNK…VFGP), 294-315 (NLRE…TFSH), 318-339 (QLQV…AFNG), 342-363 (NLRE…VFRS), 366-387 (NLQN…IFAN), and 390-411 (GLTT…IFDH). An N-linked (GlcNAc...) asparagine glycan is attached at N75. N-linked (GlcNAc...) asparagine glycosylation occurs at N369. One can recognise an LRRCT domain in the interval 423-473 (NPWRCDSDILPLHNWLLLNRARLGTDTLPVCSSPANVRGQSLVIININFPG). Positions 476–500 (VQGPETPEVPSYPDTPSYPDTTSVS) are disordered. A helical membrane pass occupies residues 536 to 556 (LAIAAIVIGIIALACSLAACI). The Cytoplasmic segment spans residues 557 to 578 (CCCCCKKRSQAVLMQMKAPNEC).

Its subcellular location is the cell membrane. In Rattus norvegicus (Rat), this protein is Leucine-rich repeat-containing protein 15 (Lrrc15).